We begin with the raw amino-acid sequence, 357 residues long: Alanine racemase (357 aa).

K33 functions as the Proton acceptor; specific for D-alanine in the catalytic mechanism. K33 is modified (N6-(pyridoxal phosphate)lysine). Substrate is bound at residue R130. Residue Y252 is the Proton acceptor; specific for L-alanine of the active site. Position 300 (M300) interacts with substrate.

The protein belongs to the alanine racemase family. The cofactor is pyridoxal 5'-phosphate.

The enzyme catalyses L-alanine = D-alanine. It participates in amino-acid biosynthesis; D-alanine biosynthesis; D-alanine from L-alanine: step 1/1. Catalyzes the interconversion of L-alanine and D-alanine. May also act on other amino acids. The polypeptide is Alanine racemase (alr) (Acidiphilium cryptum (strain JF-5)).